A 747-amino-acid chain; its full sequence is Transcription factor phm2 (747 aa).

Positions 21-50 (CNACRKRKRVRCDRLHPCSNCASRGLGSTC) form a DNA-binding region, zn(2)-C6 fungal-type. 2 disordered regions span residues 112-150 (GLQNQGSDARSDARCQPTPLSSETEFEYPVAPSPSDHGS) and 414-436 (TAEPRNLYDTDFDEDSSALPESR).

It localises to the nucleus. In terms of biological role, transcription factor that regulates the expression of the gene cluster that mediates the biosynthesis of the trans-fused decalin-containing tetramic acid phomasetin. In Pyrenochaetopsis sp, this protein is Transcription factor phm2.